The following is a 524-amino-acid chain: GMP synthase [glutamine-hydrolyzing] (524 aa).

The region spanning 12–201 (TILVLDFGSQ…AVDICKASQS (190 aa)) is the Glutamine amidotransferase type-1 domain. The Nucleophile role is filled by Cys88. Residues His175 and Glu177 contribute to the active site. Residues 202–399 (WNMENFIDTE…LGISHELVWR (198 aa)) enclose the GMPS ATP-PPase domain. 230–236 (SGGVDST) contributes to the ATP binding site. The XMP site is built by Arg303, Asp461, Lys516, and Glu522.

As to quaternary structure, homodimer. Requires Mg(2+) as cofactor.

The protein localises to the cytoplasm. Its subcellular location is the cytosol. The enzyme catalyses XMP + L-glutamine + ATP + H2O = GMP + L-glutamate + AMP + diphosphate + 2 H(+). The protein operates within purine metabolism; GMP biosynthesis; GMP from XMP (L-Gln route): step 1/1. Functionally, catalyzes the conversion of xanthine monophosphate (XMP) to GMP in the presence of glutamine and ATP through an adenyl-XMP intermediate. The polypeptide is GMP synthase [glutamine-hydrolyzing] (GUA1) (Kluyveromyces lactis (strain ATCC 8585 / CBS 2359 / DSM 70799 / NBRC 1267 / NRRL Y-1140 / WM37) (Yeast)).